Consider the following 148-residue polypeptide: D-aminoacyl-tRNA deacylase (148 aa).

A Gly-cisPro motif, important for rejection of L-amino acids motif is present at residues 137 to 138 (GP).

The protein belongs to the DTD family. Homodimer.

It localises to the cytoplasm. The catalysed reaction is glycyl-tRNA(Ala) + H2O = tRNA(Ala) + glycine + H(+). It carries out the reaction a D-aminoacyl-tRNA + H2O = a tRNA + a D-alpha-amino acid + H(+). In terms of biological role, an aminoacyl-tRNA editing enzyme that deacylates mischarged D-aminoacyl-tRNAs. Also deacylates mischarged glycyl-tRNA(Ala), protecting cells against glycine mischarging by AlaRS. Acts via tRNA-based rather than protein-based catalysis; rejects L-amino acids rather than detecting D-amino acids in the active site. By recycling D-aminoacyl-tRNA to D-amino acids and free tRNA molecules, this enzyme counteracts the toxicity associated with the formation of D-aminoacyl-tRNA entities in vivo and helps enforce protein L-homochirality. In Lacticaseibacillus casei (strain BL23) (Lactobacillus casei), this protein is D-aminoacyl-tRNA deacylase.